A 154-amino-acid polypeptide reads, in one-letter code: Ascorbate-specific PTS system EIIA component (154 aa).

The PTS EIIA type-2 domain maps to 6 to 150; the sequence is SLAENKSIRL…QEVLDLIDRT (145 aa). The active-site Tele-phosphohistidine intermediate is His68. The residue at position 68 (His68) is a Phosphohistidine.

Its subcellular location is the cytoplasm. Its function is as follows. The phosphoenolpyruvate-dependent sugar phosphotransferase system (sugar PTS), a major carbohydrate active transport system, catalyzes the phosphorylation of incoming sugar substrates concomitantly with their translocation across the cell membrane. The enzyme II UlaABC PTS system is involved in ascorbate transport. The polypeptide is Ascorbate-specific PTS system EIIA component (ulaC) (Shigella boydii serotype 4 (strain Sb227)).